The sequence spans 329 residues: Serpentine receptor class alpha-7 (329 aa).

The next 7 membrane-spanning stretches (helical) occupy residues 25-45 (YVYL…VKIV), 57-77 (ILLF…LFSA), 104-124 (YLKV…GLLL), 143-163 (VGIA…KIII), 187-207 (RLFA…SVLL), 237-257 (TICF…FGIF), and 273-293 (FIVV…ILLV).

This sequence belongs to the nematode receptor-like protein sra family.

Its subcellular location is the membrane. The polypeptide is Serpentine receptor class alpha-7 (sra-7) (Caenorhabditis elegans).